A 517-amino-acid polypeptide reads, in one-letter code: Probable bifunctional methylthioribulose-1-phosphate dehydratase/enolase-phosphatase E1 (517 aa).

Residues Met1 to Asp242 are methylthioribulose-1-phosphate dehydratase. Residue Cys114 coordinates substrate. Residues His132 and His134 each contribute to the Zn(2+) site. The active-site Proton donor/acceptor; for methylthioribulose-1-phosphate dehydratase activity is the Glu157. His207 contributes to the Zn(2+) binding site. The enolase-phosphatase E1 stretch occupies residues Val278–Ile517. Positions 281 and 283 each coordinate Mg(2+). Residues Ser416–Ser417 and Lys450 each bind substrate. Position 476 (Asp476) interacts with Mg(2+).

In the N-terminal section; belongs to the aldolase class II family. MtnB subfamily. It in the C-terminal section; belongs to the HAD-like hydrolase superfamily. MasA/MtnC family. Zn(2+) is required as a cofactor. Requires Mg(2+) as cofactor.

It carries out the reaction 5-(methylsulfanyl)-D-ribulose 1-phosphate = 5-methylsulfanyl-2,3-dioxopentyl phosphate + H2O. It catalyses the reaction 5-methylsulfanyl-2,3-dioxopentyl phosphate + H2O = 1,2-dihydroxy-5-(methylsulfanyl)pent-1-en-3-one + phosphate. Its pathway is amino-acid biosynthesis; L-methionine biosynthesis via salvage pathway; L-methionine from S-methyl-5-thio-alpha-D-ribose 1-phosphate: step 2/6. It participates in amino-acid biosynthesis; L-methionine biosynthesis via salvage pathway; L-methionine from S-methyl-5-thio-alpha-D-ribose 1-phosphate: step 3/6. The protein operates within amino-acid biosynthesis; L-methionine biosynthesis via salvage pathway; L-methionine from S-methyl-5-thio-alpha-D-ribose 1-phosphate: step 4/6. The polypeptide is Probable bifunctional methylthioribulose-1-phosphate dehydratase/enolase-phosphatase E1 (Zea mays (Maize)).